The chain runs to 324 residues: 2,3,4,5-tetrahydropyridine-2,6-dicarboxylate N-succinyltransferase (324 aa).

Mg(2+)-binding residues include Asp-173 and Glu-190. Catalysis depends on Glu-206, which acts as the Acyl-anhydride intermediate. Succinyl-CoA-binding positions include Arg-208, Gly-223, Ser-226, Ala-249, 264–265, Gly-272, Lys-284, and 297–300; these read EA and RRNS.

It belongs to the type 2 tetrahydrodipicolinate N-succinyltransferase family. As to quaternary structure, homotrimer.

The protein resides in the cytoplasm. It catalyses the reaction (S)-2,3,4,5-tetrahydrodipicolinate + succinyl-CoA + H2O = (S)-2-succinylamino-6-oxoheptanedioate + CoA. It functions in the pathway amino-acid biosynthesis; L-lysine biosynthesis via DAP pathway; LL-2,6-diaminopimelate from (S)-tetrahydrodipicolinate (succinylase route): step 1/3. Catalyzes the conversion of the cyclic tetrahydrodipicolinate (THDP) into the acyclic N-succinyl-L-2-amino-6-oxopimelate using succinyl-CoA. The sequence is that of 2,3,4,5-tetrahydropyridine-2,6-dicarboxylate N-succinyltransferase from Geodermatophilus obscurus (strain ATCC 25078 / DSM 43160 / JCM 3152 / CCUG 61914 / KCC A-0152 / KCTC 9177 / NBRC 13315 / NRRL B-3577 / G-20).